Here is a 1069-residue protein sequence, read N- to C-terminus: Acyl-CoA dehydrogenase family member 10 (1069 aa).

Lysine 413 carries the N6-succinyllysine modification. Lysine 427 is modified (N6-acetyllysine; alternate). Residue lysine 427 is modified to N6-succinyllysine; alternate. Residues 792–802 (FAMTEPQVASS), serine 828, arginine 943, glutamine 1013, and glutamate 1044 contribute to the FAD site. Lysine 1052 carries the N6-acetyllysine; alternate modification. Lysine 1052 is modified (N6-succinyllysine; alternate).

Belongs to the acyl-CoA dehydrogenase family. FAD is required as a cofactor.

It carries out the reaction a 2,3-saturated acyl-CoA + A = a 2,3-dehydroacyl-CoA + AH2. Its function is as follows. Acyl-CoA dehydrogenase only active with R- and S-2-methyl-C15-CoA. This chain is Acyl-CoA dehydrogenase family member 10 (Acad10), found in Mus musculus (Mouse).